Here is a 262-residue protein sequence, read N- to C-terminus: MEHLERCEWLLRGTLVRAAVRRYLPWALVASMLAGSLLKELSPLPESYLSNKRNVLNVYFVKVAWAWTFCLLLPFIALTNYHLTGKAGLVLRRLSTLLVGTAIWYICTSIFSNIEHYTGSCYQSPALEGVRKEHQSKQQCHQEGGFWHGFDISGHSFLLTFCALMIVEEMSVLHEVKTDRSHCLHTAITTLVVALGILTFIWVLMFLCTAVYFHNLSQKVFGTLFGLLSWYGTYGFWYPKAFSPGLPPQSCSLNLKQDSYKK.

Residues 1–23 (MEHLERCEWLLRGTLVRAAVRRY) are Cytoplasmic-facing. The chain crosses the membrane as a helical span at residues 24 to 44 (LPWALVASMLAGSLLKELSPL). Over 45-57 (PESYLSNKRNVLN) the chain is Lumenal. Residues 58 to 78 (VYFVKVAWAWTFCLLLPFIAL) traverse the membrane as a helical segment. Over 79–93 (TNYHLTGKAGLVLRR) the chain is Cytoplasmic. A helical transmembrane segment spans residues 94–114 (LSTLLVGTAIWYICTSIFSNI). Topologically, residues 115–145 (EHYTGSCYQSPALEGVRKEHQSKQQCHQEGG) are lumenal. The helical transmembrane segment at 146 to 166 (FWHGFDISGHSFLLTFCALMI) threads the bilayer. The active site involves His-155. The Cytoplasmic portion of the chain corresponds to 167-190 (VEEMSVLHEVKTDRSHCLHTAITT). A helical membrane pass occupies residues 191–211 (LVVALGILTFIWVLMFLCTAV). Residues 212-218 (YFHNLSQ) lie on the Lumenal side of the membrane. His-214 is a catalytic residue. Residues 219 to 239 (KVFGTLFGLLSWYGTYGFWYP) form a helical membrane-spanning segment. Topologically, residues 240 to 262 (KAFSPGLPPQSCSLNLKQDSYKK) are cytoplasmic.

This sequence belongs to the FIT family. FIT2 subfamily. In terms of tissue distribution, widely expressed.

It is found in the endoplasmic reticulum membrane. The catalysed reaction is an acyl-CoA + H2O = an acyl-4'-phosphopantetheine + adenosine 3',5'-bisphosphate + 2 H(+). The enzyme catalyses (9Z)-octadecenoyl-CoA + H2O = S-(9Z-octadecenoyl)-4'-phosphopantetheine + adenosine 3',5'-bisphosphate + 2 H(+). It catalyses the reaction (5Z,8Z,11Z,14Z)-eicosatetraenoyl-CoA + H2O = S-(5Z,8Z,11Z,14Z-eicosatetraenoyl)-4'-phosphopantetheine + adenosine 3',5'-bisphosphate + 2 H(+). It carries out the reaction hexadecanoyl-CoA + H2O = S-hexadecanoyl-4'-phosphopantetheine + adenosine 3',5'-bisphosphate + 2 H(+). Its function is as follows. Fatty acyl-coenzyme A (CoA) diphosphatase that hydrolyzes fatty acyl-CoA to yield acyl-4'-phosphopantetheine and adenosine 3',5'-bisphosphate. Preferentially hydrolyzes unsaturated long-chain acyl-CoA substrates such as oleoyl-CoA/(9Z)-octadecenoyl-CoA and arachidonoyl-CoA/(5Z,8Z,11Z,14Z)-eicosatetraenoyl-CoA in the endoplasmic reticulum (ER) lumen. This catalytic activity is required for maintaining ER structure and for lipid droplets (LDs) biogenesis, which are lipid storage organelles involved in maintaining lipid and energy homeostasis. Directly binds to diacylglycerol (DAGs) and triacylglycerol, which is also important for LD biogenesis. May support directional budding of nacent LDs from the ER into the cytosol by reducing DAG levels at sites of LD formation. Plays a role in the regulation of cell morphology and cytoskeletal organization. This chain is Acyl-coenzyme A diphosphatase FITM2, found in Homo sapiens (Human).